The sequence spans 256 residues: MSNPANTELSYLKSLVNELNEKIAVLEGKAPANQGVRMVLVGPPGAGKGTQAPKILERFQNMVCHLATGDLLRQQVAMGTDLGKQAKKIMDQGALVSDEIMVGMIKDQLETNRSCKKGFILDGFPRTTPQAEKLDQMLSDRKQKLDHVIELQIPDELLISRITGRLIHPGSGRSYHKIFSPPKQPMKDDITGEPLVQRSDDNEEALRKRLATYHKQTTAVTDYYKKHGIWSPIDATQSPNTVWQSISAIFNNGASA.

Residue 45-50 (GAGKGT) coordinates ATP. Positions 67–96 (ATGDLLRQQVAMGTDLGKQAKKIMDQGALV) are NMP. AMP contacts are provided by residues Thr-68, Arg-73, 94–96 (ALV), 123–126 (GFPR), and Gln-130. Residues 164 to 201 (GRLIHPGSGRSYHKIFSPPKQPMKDDITGEPLVQRSDD) are LID. Residues Arg-165 and 174–175 (SY) contribute to the ATP site. Residues Arg-198 and Arg-209 each coordinate AMP. Residue Gln-237 participates in ATP binding.

This sequence belongs to the adenylate kinase family. AK2 subfamily. In terms of assembly, monomer.

It is found in the cytoplasm. The protein localises to the cytosol. The protein resides in the mitochondrion intermembrane space. The catalysed reaction is AMP + ATP = 2 ADP. Catalyzes the reversible transfer of the terminal phosphate group between ATP and AMP. Plays an important role in cellular energy homeostasis and in adenine nucleotide metabolism. Adenylate kinase activity is critical for regulation of the phosphate utilization and the AMP de novo biosynthesis pathways. This chain is Adenylate kinase, found in Malassezia globosa (strain ATCC MYA-4612 / CBS 7966) (Dandruff-associated fungus).